We begin with the raw amino-acid sequence, 61 residues long: N-acetyl-D-glucosamine kinase (61 aa).

At Tyr-30 the chain carries Phosphotyrosine. Residue Ser-45 coordinates ATP.

This sequence belongs to the eukaryotic-type N-acetylglucosamine kinase family. In terms of assembly, homodimer.

The catalysed reaction is N-acetyl-D-glucosamine + ATP = N-acetyl-D-glucosamine 6-phosphate + ADP + H(+). It carries out the reaction aldehydo-N-acetyl-D-mannosamine + ATP = aldehydo-N-acetyl-D-mannosamine 6-phosphate + ADP + H(+). It catalyses the reaction N-acetyl-D-muramoyl-L-alanyl-D-isoglutamine + ATP = 6-O-phospho-N-acetyl-D-muramoyl-L-alanyl-D-isoglutamine + ADP + H(+). It functions in the pathway amino-sugar metabolism; N-acetylneuraminate degradation. Converts endogenous N-acetylglucosamine (GlcNAc), a major component of complex carbohydrates, from lysosomal degradation or nutritional sources into GlcNAc 6-phosphate. Also has N-acetylmannosamine (ManNAc) kinase activity. Involved in the N-glycolylneuraminic acid (Neu5Gc) degradation pathway. Also involved in innate immunity by promoting detection of bacterial peptidoglycan by NOD2: acts by catalyzing phosphorylation of muramyl dipeptide (MDP), a fragment of bacterial peptidoglycan, to generate 6-O-phospho-muramyl dipeptide, which acts as a direct ligand for NOD2. The polypeptide is N-acetyl-D-glucosamine kinase (Mesocricetus auratus (Golden hamster)).